The sequence spans 253 residues: uncharacterized protein (253 aa).

Positions 1–19 (MHYLKKVTIYISLLILVSG) are cleaved as a signal peptide. Residue Cys20 is the site of N-palmitoyl cysteine attachment. Residue Cys20 is the site of S-diacylglycerol cysteine attachment.

This sequence belongs to the staphylococcal tandem lipoprotein family.

It localises to the cell membrane. This is an uncharacterized protein from Staphylococcus epidermidis (strain ATCC 35984 / DSM 28319 / BCRC 17069 / CCUG 31568 / BM 3577 / RP62A).